We begin with the raw amino-acid sequence, 258 residues long: 2S seed storage albumin protein (258 aa).

A signal peptide spans 1–24 (MAKLIPTIALVSVLLFIIANASFA). A propeptide spanning residues 25–35 (YRTTITTIEID) is cleaved from the precursor. Intrachain disulfides connect C49–C108, C61–C97, C98–C145, and C110–C149. Residues 64 to 87 (YLRQSSSRRSPGEEVLRMPGDENQ) form a disordered region. Position 69 is a phosphoserine (S69). Over residues 73-83 (SPGEEVLRMPG) the composition is skewed to basic and acidic residues. The propeptide occupies 77–86 (EVLRMPGDEN). Q87 bears the Pyrrolidone carboxylic acid mark. 2 propeptides span residues 154 to 156 (RTN) and 191 to 193 (SDN). Cystine bridges form between C162/C212, C175/C201, C202/C249, and C214/C256. Residue Q194 is modified to Pyrrolidone carboxylic acid.

Belongs to the 2S seed storage albumins family. As to quaternary structure, the 2 mature proteins consist of heterodimers of a small and a large chain; disulfide-linked. In terms of processing, the N-terminus of both large chains is blocked. Post-translationally, the C-terminus of the allergen Ric c 1 and allergen Ric c 3 small chains are heterogeneous and the length of the chains can vary from 33 to 36 amino acids and from 36 to 40 amino acids respectively.

In terms of biological role, 2S seed storage proteins. The sequence is that of 2S seed storage albumin protein from Ricinus communis (Castor bean).